The following is a 549-amino-acid chain: Manganese transporter SMF2 (549 aa).

The tract at residues 1-23 (MTSQEYEPIQWSDESQTNNDSVN) is disordered. A compositionally biased stretch (polar residues) spans 12 to 22 (SDESQTNNDSV). 8 consecutive transmembrane segments (helical) span residues 91–109 (LLFS…QYLC), 130–147 (FGLN…IIAT), 161–185 (ILFH…LLAY), 196–214 (IFEA…CFTV), 312–332 (LLIS…IVSG), 350–372 (IYNL…ALLF), 432–452 (ASQV…LYFT), and 521–541 (VLAI…LLGF).

This sequence belongs to the NRAMP family.

It localises to the vacuole lumen. Its subcellular location is the vesicle. It is found in the cell membrane. The catalysed reaction is Mn(2+)(in) = Mn(2+)(out). In terms of biological role, high-affinity manganese transporter involved in manganese uptake from the extracellular environment. The sequence is that of Manganese transporter SMF2 (SMF2) from Saccharomyces cerevisiae (strain ATCC 204508 / S288c) (Baker's yeast).